The chain runs to 187 residues: Nuclear transcription factor Y subunit C-8 (187 aa).

The disordered stretch occupies residues 163 to 187 (WPGAWTSVSGEEEEARGKKGGDDGN). Positions 177 to 187 (ARGKKGGDDGN) are enriched in basic and acidic residues.

This sequence belongs to the NFYC/HAP5 subunit family. As to quaternary structure, heterotrimeric transcription factor composed of three components, NF-YA, NF-YB and NF-YC. NF-YB and NF-YC must interact and dimerize for NF-YA association and DNA binding. Expressed in flowers and siliques.

The protein localises to the nucleus. Stimulates the transcription of various genes by recognizing and binding to a CCAAT motif in promoters. In Arabidopsis thaliana (Mouse-ear cress), this protein is Nuclear transcription factor Y subunit C-8 (NFYC8).